Consider the following 1018-residue polypeptide: Probable inorganic carbon transporter subunit DabA 2 (1018 aa).

4 residues coordinate Zn(2+): cysteine 489, aspartate 491, histidine 674, and cysteine 689.

The protein belongs to the inorganic carbon transporter (TC 9.A.2) DabA family. As to quaternary structure, forms a complex with DabB. The cofactor is Zn(2+).

Its subcellular location is the cell inner membrane. Functionally, part of an energy-coupled inorganic carbon pump. In Sorangium cellulosum (strain So ce56) (Polyangium cellulosum (strain So ce56)), this protein is Probable inorganic carbon transporter subunit DabA 2.